The primary structure comprises 105 residues: MASITMTTSFLSTTNLTKGSPRITQRRLVVANAAKGAQVESVQMSGERKTEGNNGRREMMFAAAAAAICSVAGVATAEPKRGSAEAKKAYAPVCVTMPTARICRN.

The transit peptide at 1–77 (MASITMTTSF…ICSVAGVATA (77 aa)) directs the protein to the chloroplast.

The maturation of the PSII-T precursor to its final form occurs through a two step process. First, a stromal intermediate is formed, which, upon translocation into the thylakoid membrane, is processed to the mature protein.

It localises to the plastid. Its subcellular location is the chloroplast thylakoid membrane. Its function is as follows. May be a component of the oxygen-evolving complex. The protein is Photosystem II 5 kDa protein, chloroplastic (PSBT) of Gossypium hirsutum (Upland cotton).